Consider the following 1044-residue polypeptide: AT-rich interactive domain-containing protein 5B (1044 aa).

Disordered stretches follow at residues 143–211 (PRKK…GDEC), 301–350 (RFTK…GDKD), 363–392 (MEEL…LTED), 554–591 (NNYP…SSVE), 603–672 (QHAQ…SFLS), 733–767 (SQKE…LSTS), 811–835 (VSAS…RGEE), and 884–912 (TPLH…KPAE). Basic and acidic residues-rich tracts occupy residues 197 to 211 (VQSE…GDEC), 301 to 310 (RFTKGEEDKP), and 337 to 350 (RPKD…GDKD). The ARID domain maps to 212 to 304 (RTDEQAFLVA…LILPYERFTK (93 aa)). Over residues 369–380 (KQNSQQLQAPTQ) the composition is skewed to polar residues. Low complexity predominate over residues 565–591 (VSRRLSSSGTEVSSAGQSSSQVSSSVE). Basic and acidic residues-rich tracts occupy residues 611–635 (RGSE…EPVH), 644–660 (PYLK…KSAE), and 733–746 (SQKE…RVTE). Positions 752–767 (LSLPKSSPLKLPLSTS) are enriched in low complexity. Composition is skewed to basic and acidic residues over residues 816–826 (KVTESHSKVLE) and 894–909 (LPGK…ESVK).

The protein belongs to the ARID5B family.

It is found in the nucleus. Transcription coactivator that binds to the 5'-AATA[CT]-3' core sequence and plays a key role in adipogenesis and liver development. Required for adipogenesis: regulates triglyceride metabolism in adipocytes by regulating expression of adipogenic genes. In Danio rerio (Zebrafish), this protein is AT-rich interactive domain-containing protein 5B (arid5b).